Here is a 343-residue protein sequence, read N- to C-terminus: Phosphoglycerate mutase-like protein 2 (343 aa).

A chloroplast-targeting transit peptide spans 1–35; sequence MIHQSMTSNLSFYISSVSHLSSPLPSLSRLSLRCC. The Tele-phosphohistidine intermediate role is filled by H65. Residue E177 is the Proton donor/acceptor of the active site. The segment at 322-343 is disordered; that stretch reads MTNYPGTILTGEDASSDIADQK.

It belongs to the phosphoglycerate mutase family.

It localises to the plastid. The protein resides in the chloroplast. Functionally, may play a role in carbohydrates metabolism. This is Phosphoglycerate mutase-like protein 2 from Arabidopsis thaliana (Mouse-ear cress).